The sequence spans 66 residues: Large ribosomal subunit protein bL31 (66 aa).

Cys-16, Cys-18, Cys-36, and Cys-39 together coordinate Zn(2+).

This sequence belongs to the bacterial ribosomal protein bL31 family. Type A subfamily. As to quaternary structure, part of the 50S ribosomal subunit. It depends on Zn(2+) as a cofactor.

Binds the 23S rRNA. The polypeptide is Large ribosomal subunit protein bL31 (Desulforamulus reducens (strain ATCC BAA-1160 / DSM 100696 / MI-1) (Desulfotomaculum reducens)).